We begin with the raw amino-acid sequence, 266 residues long: Undecaprenyl-diphosphatase (266 aa).

The next 7 membrane-spanning stretches (helical) occupy residues 41 to 61 (NLAFTIVVHVATVFSTLVILW), 82 to 102 (YVINILISMLPIGIVGVFFKD), 106 to 126 (AIFGSGLLIVGCMLLLTAALL), 140 to 160 (ISMKDAFIIGLAQACAVLPGL), 180 to 200 (LAQFSFLMVIPPILGEALLDG), 213 to 233 (IPTLSLIVGFIAAFVSGCLAC), and 245 to 265 (LIYFAIYCAIVGVVTIVVSQL).

It belongs to the UppP family.

Its subcellular location is the cell inner membrane. It catalyses the reaction di-trans,octa-cis-undecaprenyl diphosphate + H2O = di-trans,octa-cis-undecaprenyl phosphate + phosphate + H(+). Functionally, catalyzes the dephosphorylation of undecaprenyl diphosphate (UPP). Confers resistance to bacitracin. In Bacteroides fragilis (strain YCH46), this protein is Undecaprenyl-diphosphatase.